Consider the following 1431-residue polypeptide: Zinc finger protein 687b (1431 aa).

2 disordered regions span residues 24-481 (KEAI…RPLK) and 504-538 (KGGA…TTAG). Residues 61–73 (SPSPSTDSQSDPS) are compositionally biased toward low complexity. Residues 103-122 (GFVSSGGSVHMSQSRGQPNG) show a composition bias toward polar residues. Low complexity-rich tracts occupy residues 174–188 (MQLL…EMNL), 196–209 (APAN…AASP), and 217–248 (LLST…ASSP). A compositionally biased stretch (polar residues) spans 249-267 (LATSLTEPFNGTPRLSSSA). Residues 311 to 324 (SQSPSIPPSTSISP) are compositionally biased toward low complexity. Positions 342–359 (RAQQNWLSTAAQTGNGKS) are enriched in polar residues. The span at 361 to 377 (PQEERNPEHVIEERDSP) shows a compositional bias: basic and acidic residues. Residues 385–410 (PKSSMPTSAVTKRSCSPAAASSPSAA) are compositionally biased toward low complexity. Residues 438 to 449 (DGGKGDTDKIEV) are compositionally biased toward basic and acidic residues. A compositionally biased stretch (gly residues) spans 519 to 528 (QTGGRAGPVK). A C2H2-type 1; degenerate zinc finger spans residues 674-692 (YRCLECGDSFALERSLARH). Residues 754–816 (TTPIGMLSPS…GPQSPQALMP (63 aa)) form a disordered region. Over residues 760–775 (LSPSLSSPPLTSSTTP) the composition is skewed to low complexity. Polar residues predominate over residues 781–802 (APSTSSPLKDSPSPGTASTQPS). Residues 830-853 (FKCPECQAQFLSKAELVTHFQQIR) form a C2H2-type 2; degenerate zinc finger. 4 C2H2-type zinc fingers span residues 919 to 942 (YRCS…QTAH), 947 to 970 (HKCP…TSQH), 982 to 1004 (YKCV…FDTH), and 1013 to 1036 (FKCP…KTAH). Residues 1041 to 1120 (VKAETPPTTS…QVSSPESGNM (80 aa)) are disordered. The span at 1043-1057 (AETPPTTSSPVSAPA) shows a compositional bias: low complexity. Residues 1058–1075 (GNSTSKPKPATENNSDEL) are compositionally biased toward polar residues. A compositionally biased stretch (acidic residues) spans 1080–1111 (GEEEEEGEDEEGEQEGEEREDEEEEENEEEEQ). Residues 1122-1145 (WRCKECKKRFPEREDYIDHMKNEH) form a C2H2-type 7 zinc finger. The C2H2-type 8; degenerate zinc-finger motif lies at 1205–1227 (WHCSEGKRTFSSRLILEKHIRVR). Residues 1225–1310 (RVRHGIRSRQ…EEEDGTFRCT (86 aa)) are disordered. 2 consecutive C2H2-type zinc fingers follow at residues 1307-1329 (FRCT…IPVH) and 1337-1360 (QQCL…FITH). A disordered region spans residues 1362-1392 (LRQGQHDRNASPGASPQYGSPSSPKAGEDGD). Residues 1373–1384 (PGASPQYGSPSS) show a composition bias toward polar residues. The segment at 1395-1425 (VSCRVCGRRFDKASDLNTHFRTHGMAFITAH) adopts a C2H2-type 11 zinc-finger fold.

The protein belongs to the krueppel C2H2-type zinc-finger protein family. In terms of tissue distribution, widely expressed with highest levels in eye, spleen and ovary.

The protein resides in the nucleus. In terms of biological role, may be involved in transcriptional regulation. In Danio rerio (Zebrafish), this protein is Zinc finger protein 687b (znf687b).